The sequence spans 1588 residues: Paternally-expressed gene 3 protein (1588 aa).

Residues 46–128 (HQRFRNLIYV…TLLENYKEMY (83 aa)) form the SCAN box domain. Disordered regions lie at residues 128–230 (YQPE…ESYQ), 266–306 (DGHS…RRGI), and 319–349 (KFIK…MSDD). Positions 129 to 142 (QPEDDNNSDVTSDD) are enriched in acidic residues. Composition is skewed to basic and acidic residues over residues 143-152 (DMTRNRRESS), 161-182 (SGDR…DRWS), 206-225 (FEMD…RSQD), and 295-306 (PEAKKSTHRRGI). 3 consecutive C2H2-type zinc fingers follow at residues 454–476 (YVCD…QIMH), 507–529 (FECK…RKIH), and 565–587 (YECR…QKIH). Basic and acidic residues predominate over residues 588 to 607 (FGDDKDNEREHERERERGET). Residues 588–610 (FGDDKDNEREHERERERGETFRP) form a disordered region. The C2H2-type 4 zinc-finger motif lies at 627–649 (YECKVCGETFLHSSSLKEHQKIH). The tract at residues 838-930 (LVASKPPRSH…EFSVPSSNVR (93 aa)) is disordered. Basic and acidic residues predominate over residues 868-881 (LNDKRQKIPARENP). The segment at 969–991 (YECQECGECFAHSSDLTEHQKIH) adopts a C2H2-type 5 zinc-finger fold. The interval 1056–1104 (EKSHGEESQGENTDGEETHSEETHGQETIEDPVIQGSDMEDPQKDDPDD) is disordered. Basic and acidic residues predominate over residues 1071–1082 (EETHSEETHGQE). 5 C2H2-type zinc fingers span residues 1107 to 1129 (YECE…QKVH), 1163 to 1185 (YECP…QRIH), 1225 to 1247 (IRCL…MRLH), 1282 to 1304 (FECA…VTVH), and 1332 to 1354 (YECK…KELH). The span at 1395 to 1415 (AEPEVEAAEPEVEAAEPEVEA) shows a compositional bias: acidic residues. The segment at 1395–1495 (AEPEVEAAEP…GIEDPEEGED (101 aa)) is disordered. 7 repeat units span residues 1397–1403 (PEVEAAE), 1404–1410 (PEVEAAE), 1411–1417 (PEVEAAE), 1418–1422 (PNGEA), 1425–1429 (PDGEA), 1432–1436 (PIGEA), and 1439–1443 (PNGEA). The 3 X 7 AA repeat of P-E-V-E-A-A-E stretch occupies residues 1397-1417 (PEVEAAEPEVEAAEPEVEAAE). A 4 X 5 AA repeat of P-X-G-E-A region spans residues 1418 to 1443 (PNGEAEGPDGEAAEPIGEAGQPNGEA). Composition is skewed to acidic residues over residues 1449–1466 (DADE…ERAE) and 1475–1495 (PEGD…EGED). C2H2-type zinc fingers lie at residues 1505–1527 (YDCH…LKTH) and 1564–1586 (FKCD…QNTH).

This sequence belongs to the krueppel C2H2-type zinc-finger protein family. As to quaternary structure, homodimer. Interacts with SIAH1A and SIAH2. Interacts with TRAF2.

The protein resides in the nucleus. The protein localises to the cytoplasm. Induces apoptosis in cooperation with SIAH1A. Acts as a mediator between p53/TP53 and BAX in a neuronal death pathway that is activated by DNA damage. Acts synergistically with TRAF2 and inhibits TNF induced apoptosis through activation of NF-kappa-B. The polypeptide is Paternally-expressed gene 3 protein (PEG3) (Pan troglodytes (Chimpanzee)).